The following is a 179-amino-acid chain: Peptide deformylase 2 (179 aa).

Residues C102 and H144 each contribute to the Fe cation site. E145 is an active-site residue. H148 contributes to the Fe cation binding site.

This sequence belongs to the polypeptide deformylase family. The cofactor is Fe(2+).

It catalyses the reaction N-terminal N-formyl-L-methionyl-[peptide] + H2O = N-terminal L-methionyl-[peptide] + formate. In terms of biological role, removes the formyl group from the N-terminal Met of newly synthesized proteins. Requires at least a dipeptide for an efficient rate of reaction. N-terminal L-methionine is a prerequisite for activity but the enzyme has broad specificity at other positions. This is Peptide deformylase 2 from Nostoc sp. (strain PCC 7120 / SAG 25.82 / UTEX 2576).